Reading from the N-terminus, the 92-residue chain is Large ribosomal subunit protein uL24c (92 aa).

It belongs to the universal ribosomal protein uL24 family. Part of the 50S ribosomal subunit.

The protein resides in the plastid. Its subcellular location is the chloroplast. One of two assembly initiator proteins, it binds directly to the 5'-end of the 23S rRNA, where it nucleates assembly of the 50S subunit. In Gracilaria tenuistipitata var. liui (Red alga), this protein is Large ribosomal subunit protein uL24c (rpl24).